Consider the following 258-residue polypeptide: Transmembrane O-methyltransferase homolog (258 aa).

S-adenosyl-L-methionine is bound by residues Glu104, 106–107, Ser112, Glu130, and Ser160; that span reads GT.

Belongs to the class I-like SAM-binding methyltransferase superfamily. Cation-dependent O-methyltransferase family. Interacts with LHFPL5, PCDH15, TMC1, TMC2 and TMIE. Interacts directly with TMC1. The interaction of TOMT with TMC1 and TMC2 is required for the transportation of TMC1/2 into the stereocilia of hair cells.

Its subcellular location is the cytoplasm. The protein localises to the endoplasmic reticulum. It carries out the reaction a catechol + S-adenosyl-L-methionine = a guaiacol + S-adenosyl-L-homocysteine + H(+). Catalyzes the O-methylation, and thereby the inactivation, of catecholamine neurotransmitters and catechol hormones. Required for auditory function. Component of the cochlear hair cell's mechanotransduction (MET) machinery. Involved in the assembly of the asymmetric tip-link MET complex. Required for transportation of TMC1 and TMC2 proteins into the mechanically sensitive stereocilia of the hair cells. The function in MET is independent of the enzymatic activity. The polypeptide is Transmembrane O-methyltransferase homolog (Rattus norvegicus (Rat)).